The following is a 162-amino-acid chain: Universal stress protein MJ0577 (162 aa).

ATP is bound by residues Pro-11, Val-41, 127-133, and 141-143; these read GSHGKTN and SVT.

This sequence belongs to the universal stress protein A family. Homodimer. Mn(2+) is required as a cofactor.

The protein localises to the cytoplasm. The chain is Universal stress protein MJ0577 from Methanocaldococcus jannaschii (strain ATCC 43067 / DSM 2661 / JAL-1 / JCM 10045 / NBRC 100440) (Methanococcus jannaschii).